The following is a 246-amino-acid chain: Adenosylcobinamide-GDP ribazoletransferase (246 aa).

A run of 6 helical transmembrane segments spans residues 37 to 57 (FPAVGLVIGAAVAGAAWAGAL), 64 to 84 (ALAALIVWVGVTGALHLDGLA), 100 to 122 (LLAVLADPHVGSFGVVAIVLQLL), 139 to 159 (ALVLVPFAARIGPLVWTWWLM), 185 to 205 (LAAAAWFTPALLVTPLLVLWW), and 223 to 243 (AGIELIETGLLLSVAITGLWI).

This sequence belongs to the CobS family. It depends on Mg(2+) as a cofactor.

The protein localises to the cell inner membrane. It catalyses the reaction alpha-ribazole + adenosylcob(III)inamide-GDP = adenosylcob(III)alamin + GMP + H(+). The catalysed reaction is alpha-ribazole 5'-phosphate + adenosylcob(III)inamide-GDP = adenosylcob(III)alamin 5'-phosphate + GMP + H(+). The protein operates within cofactor biosynthesis; adenosylcobalamin biosynthesis; adenosylcobalamin from cob(II)yrinate a,c-diamide: step 7/7. Joins adenosylcobinamide-GDP and alpha-ribazole to generate adenosylcobalamin (Ado-cobalamin). Also synthesizes adenosylcobalamin 5'-phosphate from adenosylcobinamide-GDP and alpha-ribazole 5'-phosphate. The chain is Adenosylcobinamide-GDP ribazoletransferase from Novosphingobium aromaticivorans (strain ATCC 700278 / DSM 12444 / CCUG 56034 / CIP 105152 / NBRC 16084 / F199).